Reading from the N-terminus, the 101-residue chain is NADH-quinone oxidoreductase subunit K (101 aa).

The next 3 membrane-spanning stretches (helical) occupy residues L4–I24, I30–F50, and F65–F85.

Belongs to the complex I subunit 4L family. As to quaternary structure, NDH-1 is composed of 14 different subunits. Subunits NuoA, H, J, K, L, M, N constitute the membrane sector of the complex.

The protein resides in the cell inner membrane. It catalyses the reaction a quinone + NADH + 5 H(+)(in) = a quinol + NAD(+) + 4 H(+)(out). NDH-1 shuttles electrons from NADH, via FMN and iron-sulfur (Fe-S) centers, to quinones in the respiratory chain. The immediate electron acceptor for the enzyme in this species is believed to be ubiquinone. Couples the redox reaction to proton translocation (for every two electrons transferred, four hydrogen ions are translocated across the cytoplasmic membrane), and thus conserves the redox energy in a proton gradient. In Methylobacterium sp. (strain 4-46), this protein is NADH-quinone oxidoreductase subunit K.